The sequence spans 380 residues: MAPNLRKSHPLLKMINNSLIDLPTPSNISAWWNFGSLLGICLATQILTGLLLAAHYTADTTLAFSSVAHTCRNVQHGWLIRNLHANGASFFFICIYLHIGRGLYYGSYLYKETWNTGVILLLTLMATAFVGYVLPWGQMSFWGATVITNLFSAVPYIGQTLVEWAWGGFSVDNPTLTRFFTLHFLLPFMIMGLTLIHLTFLHESGSNNPLGIVSNCDKIPFHPYFSLKDILGFMLMLLPLMTLALFSPNLLGDPENFTPANPLVTPPHIKPEWYFLFAYAILRSIPNKLGGVLALAASVLILFLAPLLHKSKQCTMTFRPFSQLLFWTLTANLLILTWVGSQPVEHPFIIIGQLASLTYFTILLILFPIIGALENKMLNY.

The next 4 membrane-spanning stretches (helical) occupy residues 34 to 54 (FGSL…LLAA), 78 to 99 (WLIR…YLHI), 114 to 134 (WNTG…GYVL), and 179 to 199 (FFTL…IHLT). Heme b-binding residues include histidine 84 and histidine 98. Heme b is bound by residues histidine 183 and histidine 197. Histidine 202 provides a ligand contact to a ubiquinone. A run of 4 helical transmembrane segments spans residues 227–247 (LKDI…ALFS), 289–309 (LGGV…PLLH), 321–341 (FSQL…WVGS), and 348–368 (FIII…ILFP).

It belongs to the cytochrome b family. The cytochrome bc1 complex contains 11 subunits: 3 respiratory subunits (MT-CYB, CYC1 and UQCRFS1), 2 core proteins (UQCRC1 and UQCRC2) and 6 low-molecular weight proteins (UQCRH/QCR6, UQCRB/QCR7, UQCRQ/QCR8, UQCR10/QCR9, UQCR11/QCR10 and a cleavage product of UQCRFS1). This cytochrome bc1 complex then forms a dimer. Requires heme b as cofactor.

It localises to the mitochondrion inner membrane. In terms of biological role, component of the ubiquinol-cytochrome c reductase complex (complex III or cytochrome b-c1 complex) that is part of the mitochondrial respiratory chain. The b-c1 complex mediates electron transfer from ubiquinol to cytochrome c. Contributes to the generation of a proton gradient across the mitochondrial membrane that is then used for ATP synthesis. The chain is Cytochrome b (MT-CYB) from Antigone rubicunda (Brolga crane).